The primary structure comprises 305 residues: Cytochrome c biogenesis protein CcsA (305 aa).

The next 8 membrane-spanning stretches (helical) occupy residues 13–33 (IYFS…VYPV), 42–62 (KGII…WFYS), 70–90 (LYES…FIDI), 97–117 (WIGV…TLIL), 135–155 (WLIM…CGSL), 212–232 (YTIV…AVWA), 242–262 (WDPK…YIHI), and 276–296 (VASL…ILGI).

This sequence belongs to the CcmF/CycK/Ccl1/NrfE/CcsA family. As to quaternary structure, may interact with Ccs1.

It localises to the plastid. It is found in the chloroplast thylakoid membrane. Functionally, required during biogenesis of c-type cytochromes (cytochrome c6 and cytochrome f) at the step of heme attachment. In Welwitschia mirabilis (Tree tumbo), this protein is Cytochrome c biogenesis protein CcsA.